Reading from the N-terminus, the 558-residue chain is Galactoside 2-alpha-L-fucosyltransferase (558 aa).

Over 1-43 (MDQNSYRRRSSPIRTTTGGSKSVNFSELLQMKYLSSGTMKLTR) the chain is Cytoplasmic. Residues 44–64 (TFTTCLIVFSVLVAFSMIFHQ) traverse the membrane as a helical; Signal-anchor for type II membrane protein segment. Over 65–558 (HPSDSNRIMG…EDISWGLKLV (494 aa)) the chain is Lumenal. 2 N-linked (GlcNAc...) asparagine glycosylation sites follow: asparagine 88 and asparagine 504.

This sequence belongs to the glycosyltransferase 37 family. Homodimer. Interacts with MUR3, XLT2, XXT2 and XXT5. Expressed in roots, stems, leaves, flowers, siliques and seedlings.

It localises to the golgi apparatus. Its subcellular location is the golgi stack membrane. The protein resides in the golgi apparatus membrane. Functionally, involved in cell wall biosynthesis. Is both necessary and sufficient for the addition of the terminal fucosyl residue on xyloglucan side chains, but is not involved in the fucosylation of other cell wall components. Associates with other xyloglucan-synthesizing enzymes to form multiprotein complexes for xyloglucan synthesis in the Golgi. The chain is Galactoside 2-alpha-L-fucosyltransferase (FUT1) from Arabidopsis thaliana (Mouse-ear cress).